A 185-amino-acid polypeptide reads, in one-letter code: Nucleoside triphosphate pyrophosphatase (185 aa).

The Proton acceptor role is filled by aspartate 70.

Belongs to the Maf family. The cofactor is a divalent metal cation.

It is found in the cytoplasm. It carries out the reaction a ribonucleoside 5'-triphosphate + H2O = a ribonucleoside 5'-phosphate + diphosphate + H(+). The enzyme catalyses a 2'-deoxyribonucleoside 5'-triphosphate + H2O = a 2'-deoxyribonucleoside 5'-phosphate + diphosphate + H(+). Functionally, nucleoside triphosphate pyrophosphatase. May have a dual role in cell division arrest and in preventing the incorporation of modified nucleotides into cellular nucleic acids. This chain is Nucleoside triphosphate pyrophosphatase, found in Nitratiruptor sp. (strain SB155-2).